Here is a 462-residue protein sequence, read N- to C-terminus: MNTRTEHDTMGNVEVPSEAYWGAQTQRSRNNFKIGGETLPQPLIYALALVKKAAAATNVSLGRIKPEQADLITQAADDVLNGKLDGQFPLVVWQTGSGTQSNMNMNEVLANRANEIAGTGLAAYQPVHPNDHVNHAQSTNDAFPTAIHVAAAIEINRHLIPAVKALRDTLDKKAQAFAPIVKIGRTHLQDATPLTLGQEFSGYVSQLDHGLGRLNDALKDLYELALGGTAVGTGLNSHPEYAEKAAAKLAELSGLPFVSAPNKFEALGGRDAAVAASGALKTLAASLNKIANDIRWLASGPRCGLGEIKIPENEPGSSIMPGKVNPTQCEAMTMVCCQVFGNDVTIGMAGASGNFELNVYMPVIAYNLLQSIRLLGDACNSFNEHCAVGIEPVPEKIDYFLHHSLMLVTALNRKIGYENAAKVAKTAYKNNKSLRETAVELGLLTGEEFDELVVPADMVHPR.

Residues 97–99 (SGT), 128–131 (HPND), 138–140 (STN), and Thr-186 contribute to the substrate site. His-187 (proton donor/acceptor) is an active-site residue. Ser-317 is a catalytic residue. Substrate-binding positions include Ser-318 and 323 to 325 (KVN).

It belongs to the class-II fumarase/aspartase family. Fumarase subfamily. As to quaternary structure, homotetramer.

It is found in the cytoplasm. It catalyses the reaction (S)-malate = fumarate + H2O. It functions in the pathway carbohydrate metabolism; tricarboxylic acid cycle; (S)-malate from fumarate: step 1/1. Functionally, involved in the TCA cycle. Catalyzes the stereospecific interconversion of fumarate to L-malate. The protein is Fumarate hydratase class II of Neisseria meningitidis serogroup A / serotype 4A (strain DSM 15465 / Z2491).